The following is a 347-amino-acid chain: MGNWTAAVTEFVLLGFSLSREVELLLLVLLLPTFLLTLLGNLLIISTVLSCSRLHTPMYFFLCNLSILDILFTSVISPKVLANLGSRDKTISFAGCITQCYFYFFLGTVEFLLLTVMSYDRYATICCPLRYTTIMRPSVCIGTVVFSWVGGFLSVLFPTILISQLPFCGSNIINHFFCDSGPLLALACADTTAIELMDFMLSSMVILCCIVLVAYSYTYIILTIVRIPSASGRKKAFNTCASHLTIVIISSGITVFIYVTPSQKEYLEINKIPLVLSSVVTPFLNPFIYTLRNDTVQGVLRDVWVRVRGVFEKRMRAVLRSRLSSNKDHQGRACSSPPCVYSVKLQC.

Over 1–24 (MGNWTAAVTEFVLLGFSLSREVEL) the chain is Extracellular. An N-linked (GlcNAc...) asparagine glycan is attached at N3. The helical transmembrane segment at 25–45 (LLLVLLLPTFLLTLLGNLLII) threads the bilayer. Residues 46-53 (STVLSCSR) are Cytoplasmic-facing. Residues 54–74 (LHTPMYFFLCNLSILDILFTS) form a helical membrane-spanning segment. Residues 75–98 (VISPKVLANLGSRDKTISFAGCIT) are Extracellular-facing. A disulfide bridge connects residues C96 and C188. A helical membrane pass occupies residues 99-119 (QCYFYFFLGTVEFLLLTVMSY). Residues 120-138 (DRYATICCPLRYTTIMRPS) are Cytoplasmic-facing. A helical membrane pass occupies residues 139–159 (VCIGTVVFSWVGGFLSVLFPT). Residues 160–196 (ILISQLPFCGSNIINHFFCDSGPLLALACADTTAIEL) lie on the Extracellular side of the membrane. A helical transmembrane segment spans residues 197 to 216 (MDFMLSSMVILCCIVLVAYS). Over 217–236 (YTYIILTIVRIPSASGRKKA) the chain is Cytoplasmic. Residues 237–257 (FNTCASHLTIVIISSGITVFI) form a helical membrane-spanning segment. Over 258 to 270 (YVTPSQKEYLEIN) the chain is Extracellular. Residues 271-291 (KIPLVLSSVVTPFLNPFIYTL) form a helical membrane-spanning segment. Over 292 to 347 (RNDTVQGVLRDVWVRVRGVFEKRMRAVLRSRLSSNKDHQGRACSSPPCVYSVKLQC) the chain is Cytoplasmic.

Belongs to the G-protein coupled receptor 1 family.

It localises to the cell membrane. Functionally, odorant receptor. This is Olfactory receptor 6J1 (OR6J1) from Homo sapiens (Human).